The primary structure comprises 341 residues: UDP-3-O-(3-hydroxymyristoyl)glucosamine N-acyltransferase (341 aa).

His239 (proton acceptor) is an active-site residue.

This sequence belongs to the transferase hexapeptide repeat family. LpxD subfamily. Homotrimer.

The enzyme catalyses a UDP-3-O-[(3R)-3-hydroxyacyl]-alpha-D-glucosamine + a (3R)-hydroxyacyl-[ACP] = a UDP-2-N,3-O-bis[(3R)-3-hydroxyacyl]-alpha-D-glucosamine + holo-[ACP] + H(+). It carries out the reaction UDP-3-O-[(3R)-3-hydroxytetradecanoyl]-alpha-D-glucosamine + (3R)-hydroxytetradecanoyl-[ACP] = UDP-2-N,3-O-bis[(3R)-3-hydroxytetradecanoyl]-alpha-D-glucosamine + holo-[ACP] + H(+). It participates in glycolipid biosynthesis; lipid IV(A) biosynthesis; lipid IV(A) from (3R)-3-hydroxytetradecanoyl-[acyl-carrier-protein] and UDP-N-acetyl-alpha-D-glucosamine: step 3/6. Catalyzes the N-acylation of UDP-3-O-(hydroxytetradecanoyl)glucosamine using 3-hydroxytetradecanoyl-ACP as the acyl donor. Is involved in the biosynthesis of lipid A, a phosphorylated glycolipid that anchors the lipopolysaccharide to the outer membrane of the cell. This is UDP-3-O-(3-hydroxymyristoyl)glucosamine N-acyltransferase from Escherichia coli (strain UTI89 / UPEC).